The chain runs to 334 residues: HTH-type transcriptional repressor PurR (334 aa).

The HTH lacI-type domain occupies 2–56 (ATIKDVAKMAGVSTTTVSHVINKTRHVADETKQTVLDAIKALNYSPSAVARSLKV). The segment at residues 4-23 (IKDVAKMAGVSTTTVSHVIN) is a DNA-binding region (H-T-H motif). The DNA-binding element occupies 48 to 56 (SAVARSLKV). Hypoxanthine is bound by residues tyrosine 73, lysine 189, threonine 191, phenylalanine 220, and aspartate 274.

As to quaternary structure, homodimer.

The protein operates within purine metabolism; purine nucleotide biosynthesis [regulation]. In terms of biological role, is the main repressor of the genes involved in the de novo synthesis of purine nucleotides, regulating purB, purC, purEK, purF, purHD, purL, purMN and guaBA expression. PurR is allosterically activated to bind its cognate DNA by binding the purine corepressors, hypoxanthine or guanine, thereby effecting transcription repression. In Mannheimia succiniciproducens (strain KCTC 0769BP / MBEL55E), this protein is HTH-type transcriptional repressor PurR.